The chain runs to 248 residues: Triosephosphate isomerase (248 aa).

Position 9 to 11 (9 to 11 (NWK)) interacts with substrate. His-92 (electrophile) is an active-site residue. Glu-164 functions as the Proton acceptor in the catalytic mechanism. Substrate contacts are provided by residues Gly-170, Ser-209, and 230–231 (GG).

This sequence belongs to the triosephosphate isomerase family. In terms of assembly, homodimer.

The protein resides in the cytoplasm. The enzyme catalyses D-glyceraldehyde 3-phosphate = dihydroxyacetone phosphate. The protein operates within carbohydrate biosynthesis; gluconeogenesis. It functions in the pathway carbohydrate degradation; glycolysis; D-glyceraldehyde 3-phosphate from glycerone phosphate: step 1/1. Functionally, involved in the gluconeogenesis. Catalyzes stereospecifically the conversion of dihydroxyacetone phosphate (DHAP) to D-glyceraldehyde-3-phosphate (G3P). This is Triosephosphate isomerase from Thiobacillus denitrificans (strain ATCC 25259 / T1).